A 380-amino-acid chain; its full sequence is MTSLKTKVIHGGISTDRTTGAVSVPIYQTSTYKQNGLGQPKEYEYSRSGNPTRHALEELIADLEGGVQGFAFSSGLAGIHAVLSLFSAGDHIILADDVYGGTFRLVDKVLTKTGIIYDLVDLSNLEDLKAAFKAETKAVYFETPSNPLLKVLDIKEISSIAKAHNALTLVDNTFATPYLQQPIALGADIVLHSATKYLGGHSDVVAGLVTTNSNELAIEIGFLQNSIGAVLGPQDSWLVQRGIKTLAPRMEAHSANAQKIAEFLEASQAVSKVYYPGLVNHEGHEIAKKQMTAFGGMISFELTDENAVKNFVENLRYFTLAESLGGVESLIEVPAVMTHASIPKELREEIGIKDGLIRLSVGVEALEDLLTDLKEALEKE.

Position 196 is an N6-(pyridoxal phosphate)lysine (Lys196).

Belongs to the trans-sulfuration enzymes family. Requires pyridoxal 5'-phosphate as cofactor.

It is found in the cytoplasm. The catalysed reaction is L,L-cystathionine + H2O = L-homocysteine + pyruvate + NH4(+). It catalyses the reaction an S-substituted L-cysteine + H2O = a thiol + pyruvate + NH4(+). Its pathway is amino-acid biosynthesis; L-methionine biosynthesis via de novo pathway; L-homocysteine from L-cystathionine: step 1/1. Functionally, the enzymatic degradation of amino acids in cheese is believed to generate aroma compounds and therefore to be essential for flavor development. Cystathionine beta-lyase (CBL) can convert cystathionine to homocysteine but is also able to catalyze an alpha, gamma elimination. With methionine as a substrate, it produces volatile sulfur compounds which are important for flavor formation in Gouda cheese. The polypeptide is Cystathionine beta-lyase (metC) (Lactococcus lactis subsp. cremoris (Streptococcus cremoris)).